The following is a 363-amino-acid chain: UDP-3-O-acylglucosamine N-acyltransferase (363 aa).

H252 serves as the catalytic Proton acceptor.

Belongs to the transferase hexapeptide repeat family. LpxD subfamily. In terms of assembly, homotrimer.

It carries out the reaction a UDP-3-O-[(3R)-3-hydroxyacyl]-alpha-D-glucosamine + a (3R)-hydroxyacyl-[ACP] = a UDP-2-N,3-O-bis[(3R)-3-hydroxyacyl]-alpha-D-glucosamine + holo-[ACP] + H(+). It functions in the pathway bacterial outer membrane biogenesis; LPS lipid A biosynthesis. Its function is as follows. Catalyzes the N-acylation of UDP-3-O-acylglucosamine using 3-hydroxyacyl-ACP as the acyl donor. Is involved in the biosynthesis of lipid A, a phosphorylated glycolipid that anchors the lipopolysaccharide to the outer membrane of the cell. The polypeptide is UDP-3-O-acylglucosamine N-acyltransferase (Cupriavidus taiwanensis (strain DSM 17343 / BCRC 17206 / CCUG 44338 / CIP 107171 / LMG 19424 / R1) (Ralstonia taiwanensis (strain LMG 19424))).